The primary structure comprises 114 residues: Large ribosomal subunit protein bL19 (114 aa).

It belongs to the bacterial ribosomal protein bL19 family.

Its function is as follows. This protein is located at the 30S-50S ribosomal subunit interface and may play a role in the structure and function of the aminoacyl-tRNA binding site. The sequence is that of Large ribosomal subunit protein bL19 from Bacillus mycoides (strain KBAB4) (Bacillus weihenstephanensis).